The following is a 204-amino-acid chain: Large ribosomal subunit protein uL4 (204 aa).

Residues 49–76 (KTKGISDVSGTTAKPYGQKRTGRARQGS) form a disordered region.

Belongs to the universal ribosomal protein uL4 family. As to quaternary structure, part of the 50S ribosomal subunit.

One of the primary rRNA binding proteins, this protein initially binds near the 5'-end of the 23S rRNA. It is important during the early stages of 50S assembly. It makes multiple contacts with different domains of the 23S rRNA in the assembled 50S subunit and ribosome. In terms of biological role, forms part of the polypeptide exit tunnel. The protein is Large ribosomal subunit protein uL4 of Wolbachia sp. subsp. Drosophila simulans (strain wRi).